Here is a 346-residue protein sequence, read N- to C-terminus: 4-hydroxy-2-oxovalerate aldolase 2 (346 aa).

One can recognise a Pyruvate carboxyltransferase domain in the interval 8-260; the sequence is VTVHDMTLRD…ETGVDVFKIQ (253 aa). A substrate-binding site is contributed by 16 to 17; that stretch reads RD. Asp-17 contributes to the Mn(2+) binding site. His-20 acts as the Proton acceptor in catalysis. Ser-170 and His-199 together coordinate substrate. The Mn(2+) site is built by His-199 and His-201. Tyr-290 contributes to the substrate binding site.

The protein belongs to the 4-hydroxy-2-oxovalerate aldolase family.

It catalyses the reaction (S)-4-hydroxy-2-oxopentanoate = acetaldehyde + pyruvate. In Metapseudomonas furukawaii (Pseudomonas furukawaii), this protein is 4-hydroxy-2-oxovalerate aldolase 2 (bphX3).